The following is a 230-amino-acid chain: UPF0173 metal-dependent hydrolase Acid_3917 (230 aa).

This sequence belongs to the UPF0173 family.

The polypeptide is UPF0173 metal-dependent hydrolase Acid_3917 (Solibacter usitatus (strain Ellin6076)).